Here is a 306-residue protein sequence, read N- to C-terminus: Homoserine O-succinyltransferase (306 aa).

Catalysis depends on Cys-142, which acts as the Acyl-thioester intermediate. Positions 163 and 192 each coordinate substrate. The active-site Proton acceptor is the His-233. Glu-235 is a catalytic residue. Residue Arg-247 participates in substrate binding.

It belongs to the MetA family.

The protein localises to the cytoplasm. The catalysed reaction is L-homoserine + succinyl-CoA = O-succinyl-L-homoserine + CoA. It functions in the pathway amino-acid biosynthesis; L-methionine biosynthesis via de novo pathway; O-succinyl-L-homoserine from L-homoserine: step 1/1. Transfers a succinyl group from succinyl-CoA to L-homoserine, forming succinyl-L-homoserine. The protein is Homoserine O-succinyltransferase of Pelagibacterium halotolerans (strain DSM 22347 / JCM 15775 / CGMCC 1.7692 / B2).